A 136-amino-acid polypeptide reads, in one-letter code: MSEEDPKACAEPEEPKAGPPPEKTSDWYRVSEDLPARFNNPAWFRGYRTKEPPSVYRTSNQAYGSRAPTVHEMPKVFYPNSYKFSRQVAVGGMFQNNTLNVYMEKSIVTGPDNYITSYDRLNFHPSYRVCRPSICD.

Residues 1 to 16 (MSEEDPKACAEPEEPK) show a composition bias toward basic and acidic residues. Positions 1 to 27 (MSEEDPKACAEPEEPKAGPPPEKTSDW) are disordered.

This sequence belongs to the PIERCE1 family. Microtubule inner protein component of sperm flagellar doublet microtubules. Interacts with CFAP53, ODAD1 and ODAD3; the interactions link the outer dynein arms docking complex (ODA-DC) to the internal microtubule inner proteins (MIP) in cilium axoneme. Expressed in trachea multiciliated cells.

The protein localises to the cytoplasm. The protein resides in the cytoskeleton. It is found in the cilium axoneme. It localises to the flagellum axoneme. In terms of biological role, microtubule inner protein involved in the attachment of outer dynein arms (ODAs) to dynein-decorated doublet microtubules (DMTs) in cilia axoneme, which is required for motile cilia beating. Functions at the initial step of left-right asymmetry specification of the visceral organs. This chain is Piercer of microtubule wall 1 protein (PIERCE1), found in Bos taurus (Bovine).